The sequence spans 840 residues: Probable sulfate permease C869.05c (840 aa).

12 helical membrane passes run 120 to 140 (WLINDLIAGITVGCVVVPQGM), 148 to 168 (LPSEYGLYSSFVGVAIYCFFA), 173 to 193 (VSIGPVAVMSLITAKVIANVM), 208 to 228 (LALLAGAITCGIGLLRLGFII), 230 to 250 (FIPVPAVAGFTTGSALNILSG), 278 to 298 (LPDTTVDAAFGLVSLFILFFT), 315 to 335 (AFFLTNTLRSAVVVIVGTAIS), 410 to 430 (LIAMGVTNLIGIFFNAYPATG), 447 to 467 (IAGIFTAAVVILSLYCLTDAF), 470 to 490 (IPNAILSAVIIHAVTDLILPM), 505 to 525 (CIFFISVIVSVFSSIENGIYV), and 527 to 547 (VCLAAALLLLRIAKPHGSFLG). In terms of domain architecture, STAS spans 578 to 733 (NLEIQSPPPG…CVEVAAPLRD (156 aa)). Phosphoserine is present on serine 823.

This sequence belongs to the SLC26A/SulP transporter (TC 2.A.53) family.

It is found in the membrane. Its function is as follows. High affinity uptake of sulfate into the cell. The chain is Probable sulfate permease C869.05c from Schizosaccharomyces pombe (strain 972 / ATCC 24843) (Fission yeast).